Consider the following 85-residue polypeptide: Hepcidin (85 aa).

An N-terminal signal peptide occupies residues 1–22 (MALSTRIQAACLLLLLLASVAS). A propeptide spanning residues 23–54 (VSVLPHQTGQLTDLRAQDTAGAEAGLQPTLQL) is cleaved from the precursor. Intrachain disulfides connect C67-C83, C70-C73, C71-C79, and C74-C82.

This sequence belongs to the hepcidin family. In terms of assembly, interacts with SLC40A1; this interaction promotes SLC40A1 rapid ubiquitination.

It localises to the secreted. Its function is as follows. Liver-produced hormone that constitutes the main circulating regulator of iron absorption and distribution across tissues. Acts by promoting endocytosis and degradation of ferroportin/SLC40A1, leading to the retention of iron in iron-exporting cells and decreased flow of iron into plasma. Controls the major flows of iron into plasma: absorption of dietary iron in the intestine, recycling of iron by macrophages, which phagocytose old erythrocytes and other cells, and mobilization of stored iron from hepatocytes. Functionally, has strong antimicrobial activity against E.coli ML35P N.cinerea and weaker against S.epidermidis, S.aureus and group b streptococcus bacteria. Active against the fungus C.albicans. No activity against P.aeruginosa. In Canis lupus familiaris (Dog), this protein is Hepcidin (HAMP).